The primary structure comprises 488 residues: Poly(3-hydroxybutyrate) depolymerase (488 aa).

The first 27 residues, 1–27, serve as a signal peptide directing secretion; that stretch reads MVRRLWRRIAGWLAACVAILCAFPLHA. Ser-166 serves as the catalytic Charge relay system. The Fibronectin type-III domain maps to 346–428; the sequence is APTGLAVTAT…AAVSATTKSA (83 aa).

It belongs to the AB hydrolase superfamily. Lipase family.

The protein resides in the secreted. The enzyme catalyses [(3R)-hydroxybutanoate](n) + H2O = [(3R)-hydroxybutanoate](n-2) + (3R)-hydroxybutanoate dimer + H(+). It carries out the reaction [(3R)-hydroxybutanoate](n) + H2O = [(3R)-hydroxybutanoate](n-3) + (3R)-hydroxybutanoate trimer + H(+). It catalyses the reaction [(3R)-hydroxybutanoate](n) + H2O = [(3R)-hydroxybutanoate](n-1) + (R)-3-hydroxybutanoate + H(+). The catalysed reaction is [(3R)-hydroxybutanoate](n) + H2O = [(3R)-hydroxybutanoate](n-5) + (3R)-hydroxybutanoate pentamer + H(+). The enzyme catalyses [(3R)-hydroxybutanoate](n) + H2O = [(3R)-hydroxybutanoate](n-4) + (3R)-hydroxybutanoate tetramer + H(+). This protein degrades water-insoluble and water-soluble PHB to monomeric D(-)-3-hydroxybutyrate. The sequence is that of Poly(3-hydroxybutyrate) depolymerase from Ralstonia pickettii (Burkholderia pickettii).